Reading from the N-terminus, the 132-residue chain is Telomere bouquet protein 1 (132 aa).

In terms of assembly, interacts with bqt2 and sad1. The bqt1-bqt2-sad1 complex binds rap1.

The protein resides in the cytoplasm. It localises to the cytoskeleton. Its subcellular location is the microtubule organizing center. It is found in the spindle pole body. The protein localises to the chromosome. The protein resides in the telomere. In terms of biological role, involved in chromosome segregation. During meiotic prophase, connects telomeres to the spindle pole body by forming a bridge between the telomere protein rap1 and the spindle pole body protein sad1. This chain is Telomere bouquet protein 1 (bqt1), found in Schizosaccharomyces pombe (strain 972 / ATCC 24843) (Fission yeast).